The chain runs to 201 residues: Glycerol-3-phosphate acyltransferase (201 aa).

Helical transmembrane passes span 5–25, 55–75, 88–108, 118–138, and 164–184; these read LLGA…FGVV, KMGV…ILLA, WSTA…WLGF, LGIF…GYAV, and TYGV…LIFL.

This sequence belongs to the PlsY family. Probably interacts with PlsX.

It localises to the cell inner membrane. The enzyme catalyses an acyl phosphate + sn-glycerol 3-phosphate = a 1-acyl-sn-glycero-3-phosphate + phosphate. It participates in lipid metabolism; phospholipid metabolism. Catalyzes the transfer of an acyl group from acyl-phosphate (acyl-PO(4)) to glycerol-3-phosphate (G3P) to form lysophosphatidic acid (LPA). This enzyme utilizes acyl-phosphate as fatty acyl donor, but not acyl-CoA or acyl-ACP. The chain is Glycerol-3-phosphate acyltransferase from Anaeromyxobacter dehalogenans (strain 2CP-C).